A 459-amino-acid chain; its full sequence is Ribulose bisphosphate carboxylase large chain (459 aa).

K4 carries the N6,N6,N6-trimethyllysine modification. Residues N113 and T163 each coordinate substrate. K165 functions as the Proton acceptor in the catalytic mechanism. K167 contacts substrate. Mg(2+) contacts are provided by K191, D193, and E194. An N6-carboxylysine modification is found at K191. The Proton acceptor role is filled by H284. Residues R285, H317, and S369 each coordinate substrate.

Belongs to the RuBisCO large chain family. Type I subfamily. In terms of assembly, heterohexadecamer of 8 large chains and 8 small chains; disulfide-linked. The disulfide link is formed within the large subunit homodimers. Mg(2+) is required as a cofactor. The disulfide bond which can form in the large chain dimeric partners within the hexadecamer appears to be associated with oxidative stress and protein turnover.

It localises to the plastid. Its subcellular location is the chloroplast. It catalyses the reaction 2 (2R)-3-phosphoglycerate + 2 H(+) = D-ribulose 1,5-bisphosphate + CO2 + H2O. It carries out the reaction D-ribulose 1,5-bisphosphate + O2 = 2-phosphoglycolate + (2R)-3-phosphoglycerate + 2 H(+). RuBisCO catalyzes two reactions: the carboxylation of D-ribulose 1,5-bisphosphate, the primary event in carbon dioxide fixation, as well as the oxidative fragmentation of the pentose substrate in the photorespiration process. Both reactions occur simultaneously and in competition at the same active site. This chain is Ribulose bisphosphate carboxylase large chain, found in Apium graveolens (Celery).